Here is a 415-residue protein sequence, read N- to C-terminus: MTEKLQPLRGIKDLLPDDYKVHDYIISKARDVGVLYGYKQMSTPILEYTKVFNRSMGESSDVISKEIYSFLDKSNESVALRPEFTAGIIRSFISNGLQHKLPLKLFSTGPVFRYDRPQAGRQRQFHQLNYEYIGAKGAITDAETLKLAIDILKALAIEQDTLLELNSLGCSESRSAYKQKLVEYLSDFKDQLSEESKIRMIKNPMRILDSKSEIDQKIVAYAPILSEYYTDESKEYFDELIKYLDILGVKYSINPRLVRGLDYYCHTAFEFTTNKLGSQSTILAGGRYDGLSRIMGNNDDVPAIGFAAGIERIALMREYDISEVKPVFVLPIGDNNITYALEIVDKLRAQNIATIVEPLGKIAKRMQRVLNENAKFIIFIGDEEQENNSIKLKDLEKQEEYIVDFAKAFELLKKY.

The protein belongs to the class-II aminoacyl-tRNA synthetase family. In terms of assembly, homodimer.

The protein localises to the cytoplasm. The catalysed reaction is tRNA(His) + L-histidine + ATP = L-histidyl-tRNA(His) + AMP + diphosphate + H(+). This is Histidine--tRNA ligase from Rickettsia akari (strain Hartford).